Reading from the N-terminus, the 162-residue chain is RNA pyrophosphohydrolase (162 aa).

Residues 11 to 155 (PYRPCVGIVL…KRAVYEEVVA (145 aa)) enclose the Nudix hydrolase domain. The Nudix box signature appears at 45–66 (GGIDEGEKPREAALRELWEETG).

Belongs to the Nudix hydrolase family. RppH subfamily. A divalent metal cation is required as a cofactor.

Functionally, accelerates the degradation of transcripts by removing pyrophosphate from the 5'-end of triphosphorylated RNA, leading to a more labile monophosphorylated state that can stimulate subsequent ribonuclease cleavage. The sequence is that of RNA pyrophosphohydrolase from Cereibacter sphaeroides (strain ATCC 17029 / ATH 2.4.9) (Rhodobacter sphaeroides).